Consider the following 424-residue polypeptide: Gamma-glutamyl phosphate reductase (424 aa).

This sequence belongs to the gamma-glutamyl phosphate reductase family.

Its subcellular location is the cytoplasm. The catalysed reaction is L-glutamate 5-semialdehyde + phosphate + NADP(+) = L-glutamyl 5-phosphate + NADPH + H(+). It participates in amino-acid biosynthesis; L-proline biosynthesis; L-glutamate 5-semialdehyde from L-glutamate: step 2/2. Catalyzes the NADPH-dependent reduction of L-glutamate 5-phosphate into L-glutamate 5-semialdehyde and phosphate. The product spontaneously undergoes cyclization to form 1-pyrroline-5-carboxylate. The polypeptide is Gamma-glutamyl phosphate reductase (Halorhodospira halophila (strain DSM 244 / SL1) (Ectothiorhodospira halophila (strain DSM 244 / SL1))).